The following is a 422-amino-acid chain: Phagosome assembly factor 1 (422 aa).

This sequence belongs to the PHAF1 family. Interacts with BCAS3; the interaction is requrired for the association with the phagophore.

It localises to the cytoplasm. Its subcellular location is the preautophagosomal structure. In terms of biological role, plays a regulatory role in autophagic activity. In complex with BCAS3, associates with the autophagosome formation site during both non-selective and selective autophagy. This is Phagosome assembly factor 1 from Mus musculus (Mouse).